Consider the following 444-residue polypeptide: Type VII secretion system protein EssB (444 aa).

Over 1–229 (MVKNHDPKNE…RKVGHTVFKW (229 aa)) the chain is Cytoplasmic. Residues 230–250 (VAIGMTTLSVLLIAFLAFLYF) form a helical membrane-spanning segment. The Extracellular portion of the chain corresponds to 251–444 (SVMKHNERIE…EKRQEAERKK (194 aa)). The segment at 366–444 (KNNGDLSNDK…EKRQEAERKK (79 aa)) is disordered. The segment covering 372-444 (SNDKRSEETK…EKRQEAERKK (73 aa)) has biased composition (basic and acidic residues). The stretch at 387 to 443 (LQDILDKEKQVKDEKAKSEEEKAKAKDEKLKQQEENEKKQKEQAQKDKEKRQEAERK) forms a coiled coil.

It belongs to the EssB family.

It is found in the cell membrane. Functionally, component of the type VII secretion system (Ess). Required for the secretion of EsxA. In Staphylococcus aureus (strain MRSA252), this protein is Type VII secretion system protein EssB.